The sequence spans 252 residues: Probable transcriptional regulatory protein CE1776 (252 aa).

The segment at 1–22 (MAGHSKWATTKHKKAANDAKRG) is disordered.

The protein belongs to the TACO1 family.

It is found in the cytoplasm. This chain is Probable transcriptional regulatory protein CE1776, found in Corynebacterium efficiens (strain DSM 44549 / YS-314 / AJ 12310 / JCM 11189 / NBRC 100395).